A 1173-amino-acid chain; its full sequence is TBC1 domain family member 5 homolog A (1173 aa).

Disordered stretches follow at residues 22–203 (KKSK…YYNE), 217–324 (NNYN…RNPN), 425–446 (DQDA…KPVS), and 823–872 (IVNQ…QNKG). Low complexity-rich tracts occupy residues 26-107 (SNIN…NNVN), 127-203 (NNNI…YYNE), and 217-290 (NNYN…QQYY). Residues 163 to 214 (NENYNENYNNNNNNNNNNNNNNNNNNNNNNNNNNNNNYYNENNNQQQLQQNY) are a coiled coil. Over residues 299-313 (QHEEFEKEIEQKEQD) the composition is skewed to basic and acidic residues. The segment covering 314–324 (SSPINVNRNPN) has biased composition (polar residues). One can recognise a Rab-GAP TBC domain in the interval 374–729 (PKDTTVRSIF…ILWDSIFKES (356 aa)). The segment covering 431–441 (QQQQQQQQQQQ) has biased composition (low complexity). Positions 885 to 930 (TFKQIINDLNEYNEEFQLAKENEQLKQQKSKLQKEVDTLKETQTHV) form a coiled coil. Over residues 983 to 994 (NNSKNRLPNKSV) the composition is skewed to polar residues. Disordered stretches follow at residues 983–1015 (NNSK…QQTS) and 1054–1089 (QSTQ…QQYN). 2 stretches are compositionally biased toward low complexity: residues 995-1015 (QQST…QQTS) and 1054-1078 (QSTQ…QSQQ). The span at 1079–1089 (NNDNSPFQQYN) shows a compositional bias: polar residues.

May act as a GTPase-activating protein for Rab family protein(s). This Dictyostelium discoideum (Social amoeba) protein is TBC1 domain family member 5 homolog A (tbc1d5A).